A 154-amino-acid polypeptide reads, in one-letter code: Ribosome maturation factor RimP (154 aa).

This sequence belongs to the RimP family.

It is found in the cytoplasm. Required for maturation of 30S ribosomal subunits. This chain is Ribosome maturation factor RimP, found in Salmonella gallinarum (strain 287/91 / NCTC 13346).